Consider the following 548-residue polypeptide: Tyrosine-protein phosphatase non-receptor type 61F (548 aa).

The Cytoplasmic segment spans residues 1-525 (MSEQKTSGSG…KQLAAKKRRS (525 aa)). One can recognise a Tyrosine-protein phosphatase domain in the interval 33–296 (FYKEICETCD…DFSYQAIIEG (264 aa)). Positions 46 to 65 (KEKQFSTSESERHTNRGLNR) are disordered. Position 83 is a phosphoserine (Ser-83). Tyr-86 bears the Phosphotyrosine mark. Residues Asp-203, 237-243 (CSAGIGR), and Gln-281 each bind substrate. The active-site Phosphocysteine intermediate is Cys-237. Short sequence motifs (PXXP motif (SH3-binding)) lie at residues 327–330 (PPLP), 339–342 (PLAP), and 394–397 (PPLP). The tract at residues 386 to 517 (EVADSRPLPP…RKQRENEDKQ (132 aa)) is disordered. Residues 404-428 (SDSDEDYLLDDDDEDDTDEDEEYET) show a composition bias toward acidic residues. 2 short sequence motifs (PXXP motif (SH3-binding)) span residues 459 to 462 (PAVP) and 480 to 483 (PASP). Positions 502–517 (KVNDMKRKQRENEDKQ) are enriched in basic and acidic residues. Residues 526–545 (LLTYIAAGVVVGVICAYAYT) form a helical membrane-spanning segment. Over 546-548 (KLG) the chain is Extracellular.

This sequence belongs to the protein-tyrosine phosphatase family. Non-receptor class 1 subfamily. In terms of assembly, interacts (via C-terminus) with dock/dreadlocks; this interaction is independent of insulin stimulation and is required for dephosphorylation of the insulin-like receptor InR.

The protein localises to the cytoplasm. The protein resides in the membrane. It is found in the endomembrane system. Its subcellular location is the nucleus. The enzyme catalyses O-phospho-L-tyrosyl-[protein] + H2O = L-tyrosyl-[protein] + phosphate. In terms of biological role, non-receptor protein tyrosine phosphatase. Required for maintaining dock/dreadlocks in its non-phosphorylated state. Negative regulator of InR/insulin-like receptor signaling through dephosphorylation of tyrosines when recruited by dock/dreadlocks. This Drosophila melanogaster (Fruit fly) protein is Tyrosine-protein phosphatase non-receptor type 61F.